Here is a 119-residue protein sequence, read N- to C-terminus: Na(+)/H(+) antiporter subunit G (119 aa).

A run of 3 helical transmembrane segments spans residues 7-29, 44-61, and 66-88; these read IISI…IIRF, TLGV…FFLV, and VGKL…MMMG.

Belongs to the CPA3 antiporters (TC 2.A.63) subunit G family. In terms of assembly, forms a heterooligomeric complex that consists of seven subunits: MrpA, MrpB, MrpC, MrpD, MrpE, MrpF and MrpG.

It localises to the cell membrane. Functionally, mnh complex is a Na(+)Li(+)/H(+) antiporter involved in Na(+) and/or Li(+) excretion and Na(+) resistance. Na(+)/H(+) antiport consumes a transmembrane electrical potential, and is thus inferred to be electrogenic. Does not transport K(+), Ca(2+) or Mg(2+). The sequence is that of Na(+)/H(+) antiporter subunit G (mrpG) from Alkalihalophilus pseudofirmus (strain ATCC BAA-2126 / JCM 17055 / OF4) (Bacillus pseudofirmus).